We begin with the raw amino-acid sequence, 312 residues long: UDP-N-acetylenolpyruvoylglucosamine reductase (312 aa).

The FAD-binding PCMH-type domain maps to 33-199 (RVGGKAEWYC…TGATLQLLPG (167 aa)). R178 is a catalytic residue. S229 functions as the Proton donor in the catalytic mechanism. The active site involves E299.

Belongs to the MurB family. Requires FAD as cofactor.

The protein resides in the cytoplasm. It carries out the reaction UDP-N-acetyl-alpha-D-muramate + NADP(+) = UDP-N-acetyl-3-O-(1-carboxyvinyl)-alpha-D-glucosamine + NADPH + H(+). It functions in the pathway cell wall biogenesis; peptidoglycan biosynthesis. Its function is as follows. Cell wall formation. The chain is UDP-N-acetylenolpyruvoylglucosamine reductase from Synechococcus sp. (strain JA-3-3Ab) (Cyanobacteria bacterium Yellowstone A-Prime).